We begin with the raw amino-acid sequence, 1170 residues long: Integrin alpha-2 (1170 aa).

Residues 1-18 (PLQLVLVFSQGILNCCVA) form the signal peptide. Topologically, residues 19–1121 (YNVGLPKAKI…KPHEKVEVPT (1103 aa)) are extracellular. FG-GAP repeat units lie at residues 23-81 (LPKA…TTTC) and 90-150 (TSMS…LRTS). Cys-72 and Cys-81 are oxidised to a cystine. Asn-94, Asn-101, and Asn-332 each carry an N-linked (GlcNAc...) asparagine glycan. The region spanning 177–354 (WDAVKNFLEK…TIGEQIFSIE (178 aa)) is the VWFA domain. 5 FG-GAP repeats span residues 355–409 (GTVQ…LIFS), 412–464 (AFEQ…ENGN), 466–528 (TVIQ…ILNW), 529–587 (HQFL…MIRL), and 591–653 (QKIL…FTPK). Residues Asn-421, Asn-449, and Asn-464 are each glycosylated (N-linked (GlcNAc...) asparagine). The Cell attachment site motif lies at 472–474 (RGD). 12 residues coordinate Ca(2+): Asp-488, Asn-490, Asp-492, Asp-496, Asp-552, Asn-554, Asp-556, Asp-560, Asp-616, Asn-618, Asp-620, and Asp-624. Cys-669 and Cys-726 are disulfide-bonded. Residues Asn-688 and Asn-748 are each glycosylated (N-linked (GlcNAc...) asparagine). Disulfide bonds link Cys-778-Cys-784 and Cys-854-Cys-865. The N-linked (GlcNAc...) asparagine glycan is linked to Asn-945. Intrachain disulfides connect Cys-1008-Cys-1039 and Cys-1044-Cys-1049. Asn-1063 and Asn-1070 each carry an N-linked (GlcNAc...) asparagine glycan. A helical transmembrane segment spans residues 1122 to 1143 (GVIVGSVIAGILLLLALVAILW). At 1144 to 1170 (KLGFFKRKYEKMAKNPDETDETTELNS) the chain is on the cytoplasmic side. The GFFKR motif signature appears at 1146–1150 (GFFKR).

It belongs to the integrin alpha chain family. In terms of assembly, heterodimer of an alpha and a beta subunit. Alpha-2 associates with beta-1. Interacts with HPS5 and RAB21.

The protein resides in the membrane. In terms of biological role, integrin alpha-2/beta-1 is a receptor for laminin, collagen, collagen C-propeptides, fibronectin and E-cadherin. It recognizes the proline-hydroxylated sequence G-F-P-G-E-R in collagen. It is responsible for adhesion of platelets and other cells to collagens, modulation of collagen and collagenase gene expression, force generation and organization of newly synthesized extracellular matrix. The polypeptide is Integrin alpha-2 (ITGA2) (Bos taurus (Bovine)).